A 327-amino-acid polypeptide reads, in one-letter code: Protein CONSERVED IN THE GREEN LINEAGE AND DIATOMS 27, chloroplastic (327 aa).

The N-terminal 59 residues, Met-1–Ala-59, are a transit peptide targeting the chloroplast. The interval Asn-66–Ser-88 is disordered. 3 helical membrane-spanning segments follow: residues Leu-119–Phe-139, Phe-148–Tyr-168, and Leu-225–Val-245.

Mostly expressed in seeds, leaves and flowers, and, to a lower extent, in roots.

The protein resides in the membrane. It is found in the plastid. Its subcellular location is the chloroplast. Its function is as follows. Required for growth in low iron conditions. This chain is Protein CONSERVED IN THE GREEN LINEAGE AND DIATOMS 27, chloroplastic, found in Arabidopsis thaliana (Mouse-ear cress).